A 476-amino-acid polypeptide reads, in one-letter code: Calcium/calmodulin-dependent protein kinase type 1G (476 aa).

Positions 23 to 277 (FIFMEVLGSG…CEKALRHPWI (255 aa)) constitute a Protein kinase domain. ATP contacts are provided by residues 29–37 (LGSGAFSEV) and K52. Residue D143 is the Proton acceptor of the active site. Residues 277-317 (IDGNTALHRDIYPSVSLQIQKNFAKSKWRQAFNAAAVVHHM) form an autoinhibitory domain region. Positions 297 to 318 (KNFAKSKWRQAFNAAAVVHHMR) are calmodulin-binding. Residues 326–387 (SPSVRQEVEN…SSRPSAPGGR (62 aa)) form a disordered region.

This sequence belongs to the protein kinase superfamily. CAMK Ser/Thr protein kinase family. CaMK subfamily. Post-translationally, prenylated on Cys-473.

The protein resides in the cytoplasm. The protein localises to the golgi apparatus membrane. It is found in the cell membrane. The catalysed reaction is L-seryl-[protein] + ATP = O-phospho-L-seryl-[protein] + ADP + H(+). It catalyses the reaction L-threonyl-[protein] + ATP = O-phospho-L-threonyl-[protein] + ADP + H(+). Its activity is regulated as follows. Activated by Ca(2+)/calmodulin. Binding of calmodulin is thought to result in a conformational change and leads to activation through phosphorylation by CAMKK1. Calcium/calmodulin-dependent protein kinase belonging to a proposed calcium-triggered signaling cascade. In vitro phosphorylates transcription factor CREB1. This chain is Calcium/calmodulin-dependent protein kinase type 1G (Camk1g), found in Rattus norvegicus (Rat).